A 66-amino-acid chain; its full sequence is DNA-directed RNA polymerase subunit omega (66 aa).

It belongs to the RNA polymerase subunit omega family. As to quaternary structure, the RNAP catalytic core consists of 2 alpha, 1 beta, 1 beta' and 1 omega subunit. When a sigma factor is associated with the core the holoenzyme is formed, which can initiate transcription.

It carries out the reaction RNA(n) + a ribonucleoside 5'-triphosphate = RNA(n+1) + diphosphate. Its function is as follows. Promotes RNA polymerase assembly. Latches the N- and C-terminal regions of the beta' subunit thereby facilitating its interaction with the beta and alpha subunits. The sequence is that of DNA-directed RNA polymerase subunit omega from Geobacillus kaustophilus (strain HTA426).